A 93-amino-acid chain; its full sequence is Putative septation protein SpoVG (93 aa).

This sequence belongs to the SpoVG family.

Functionally, could be involved in septation. This is Putative septation protein SpoVG from Treponema denticola (strain ATCC 35405 / DSM 14222 / CIP 103919 / JCM 8153 / KCTC 15104).